A 421-amino-acid polypeptide reads, in one-letter code: Acetylglutamate kinase (421 aa).

The segment at 1–252 (MASAKEISQY…PLESSVSITR (252 aa)) is acetylglutamate kinase. Residues 59–60 (AG), R81, and N170 each bind substrate. Residues 274–420 (ERVIRATTWK…HCTQHPPTLI (147 aa)) form the N-acetyltransferase domain.

It in the N-terminal section; belongs to the acetylglutamate kinase family. ArgB subfamily.

It localises to the cytoplasm. It carries out the reaction N-acetyl-L-glutamate + ATP = N-acetyl-L-glutamyl 5-phosphate + ADP. It participates in amino-acid biosynthesis; L-arginine biosynthesis; N(2)-acetyl-L-ornithine from L-glutamate: step 2/4. The sequence is that of Acetylglutamate kinase (argB) from Xylella fastidiosa (strain Temecula1 / ATCC 700964).